The chain runs to 97 residues: Co-chaperonin GroES (97 aa).

The protein belongs to the GroES chaperonin family. Heptamer of 7 subunits arranged in a ring. Interacts with the chaperonin GroEL.

It localises to the cytoplasm. Its function is as follows. Together with the chaperonin GroEL, plays an essential role in assisting protein folding. The GroEL-GroES system forms a nano-cage that allows encapsulation of the non-native substrate proteins and provides a physical environment optimized to promote and accelerate protein folding. GroES binds to the apical surface of the GroEL ring, thereby capping the opening of the GroEL channel. This chain is Co-chaperonin GroES, found in Symbiobacterium thermophilum (strain DSM 24528 / JCM 14929 / IAM 14863 / T).